The chain runs to 492 residues: Transmembrane protein 104 homolog (492 aa).

Over 1-17 (MQSNTDSSTSGTYSQTV) the chain is Cytoplasmic. The chain crosses the membrane as a helical span at residues 18–38 (GLLYVFNLIVGTGALALPKAF). The Extracellular segment spans residues 39 to 44 (QTAGWL). Residues 45–65 (LSITLLTFSAFMSYVAATFVI) traverse the membrane as a helical segment. Over 66–113 (EALSVANAVLSKKRRVEYDDVVVADGPSTFEISKKVEVSEMASMFLSK) the chain is Cytoplasmic. Residues 114–134 (VSLVFSYFAIIIYLFGDLAIY) form a helical membrane-spanning segment. The Extracellular portion of the chain corresponds to 135-176 (STTVPKSAMNIVCATINASTVKSSDPCHESWPEILTRMTVYR). N-linked (GlcNAc...) asparagine glycosylation occurs at asparagine 151. The helical transmembrane segment at 177 to 197 (FFVIIFVVVVCLPMVIAGITK) threads the bilayer. The Cytoplasmic portion of the chain corresponds to 198–209 (TRHIQIMTTLSR). A helical membrane pass occupies residues 210-230 (WAAFILMISLATMQLSSDGAA). The Extracellular segment spans residues 231 to 237 (AHPPAYN). The helical transmembrane segment at 238–258 (FHGFGSLFGCAVYAFMCHHSI) threads the bilayer. Residues 259 to 274 (PSLITPMRTKDNVFGK) are Cytoplasmic-facing. The helical transmembrane segment at 275 to 295 (IALVYGVVGVFYFTLSLTGAF) threads the bilayer. Residues 296 to 324 (AFEHVQDIYTLNFFHDGNTSFIYSIIDYF) lie on the Extracellular side of the membrane. A glycan (N-linked (GlcNAc...) asparagine) is linked at asparagine 313. Residues 325 to 345 (LALFPIITLTSSYPIIALTLI) traverse the membrane as a helical segment. At 346-392 (NNFNVVKDILCPKVGQENESLLEADSLVEDNDTDDEREARNARNEKS) the chain is on the cytoplasmic side. Residues 393–413 (VFDVLVPALVLALPTFLSLLT) form a helical membrane-spanning segment. Residues 414 to 415 (DD) lie on the Extracellular side of the membrane. The helical transmembrane segment at 416–436 (MLLLASITGSFPGVAVQFAIP) threads the bilayer. Residues 437 to 466 (CLLVTAARKHARSVLNFPVPRKNNSPFQSP) are Cytoplasmic-facing. A helical transmembrane segment spans residues 467-487 (IWIVLISSWAGFSMIMVLLNL). The Extracellular segment spans residues 488–492 (VGVKF).

The protein belongs to the TMEM104 family.

It localises to the membrane. The chain is Transmembrane protein 104 homolog from Caenorhabditis elegans.